The primary structure comprises 323 residues: uncharacterized protein (323 aa).

This is an uncharacterized protein from Treponema pallidum (strain Nichols).